The chain runs to 173 residues: NAD(P)H-quinone oxidoreductase subunit I, chloroplastic (173 aa).

4Fe-4S ferredoxin-type domains are found at residues 55–84 and 95–124; these read GRIH…VDWD and RSYS…MTEE. Positions 64, 67, 70, 74, 104, 107, 110, and 114 each coordinate [4Fe-4S] cluster.

Belongs to the complex I 23 kDa subunit family. NDH is composed of at least 16 different subunits, 5 of which are encoded in the nucleus. Requires [4Fe-4S] cluster as cofactor.

The protein resides in the plastid. Its subcellular location is the chloroplast thylakoid membrane. The catalysed reaction is a plastoquinone + NADH + (n+1) H(+)(in) = a plastoquinol + NAD(+) + n H(+)(out). It catalyses the reaction a plastoquinone + NADPH + (n+1) H(+)(in) = a plastoquinol + NADP(+) + n H(+)(out). NDH shuttles electrons from NAD(P)H:plastoquinone, via FMN and iron-sulfur (Fe-S) centers, to quinones in the photosynthetic chain and possibly in a chloroplast respiratory chain. The immediate electron acceptor for the enzyme in this species is believed to be plastoquinone. Couples the redox reaction to proton translocation, and thus conserves the redox energy in a proton gradient. The polypeptide is NAD(P)H-quinone oxidoreductase subunit I, chloroplastic (Nephroselmis olivacea (Green alga)).